Here is a 195-residue protein sequence, read N- to C-terminus: MPLFFSDNLRAALECLLFVAGGPVSVDSLAACLGVKPGDVDELAAELQELYAREERGLQIRAVAGGYQMCTRPEFASYCEALLRPELPALSRAALETLAIIAYRQPVTRTEMEYIRGVKVDGVLNTLISRGLVQEVGRKEAPGRPILYGTTPKFLEFFGLKDLKELPPLEDVAASQENSREAGGRGSIPGHPGEE.

Residues 169–195 (LEDVAASQENSREAGGRGSIPGHPGEE) are disordered.

This sequence belongs to the ScpB family. As to quaternary structure, homodimer. Homodimerization may be required to stabilize the binding of ScpA to the Smc head domains. Component of a cohesin-like complex composed of ScpA, ScpB and the Smc homodimer, in which ScpA and ScpB bind to the head domain of Smc. The presence of the three proteins is required for the association of the complex with DNA.

The protein localises to the cytoplasm. Its function is as follows. Participates in chromosomal partition during cell division. May act via the formation of a condensin-like complex containing Smc and ScpA that pull DNA away from mid-cell into both cell halves. In Moorella thermoacetica (strain ATCC 39073 / JCM 9320), this protein is Segregation and condensation protein B.